Here is a 378-residue protein sequence, read N- to C-terminus: Beta-1,3-N-acetylglucosaminyltransferase lunatic fringe (378 aa).

The Cytoplasmic portion of the chain corresponds to methionine 1–arginine 8. The helical; Signal-anchor for type II membrane protein transmembrane segment at leucine 9 to proline 29 threads the bilayer. The Lumenal segment spans residues proline 30–phenylalanine 378. The disordered stretch occupies residues arginine 85–valine 108. Arginine 128 is a binding site for substrate. Asparagine 166 is a glycosylation site (N-linked (GlcNAc...) asparagine). Disulfide bonds link cysteine 167/cysteine 178 and cysteine 196/cysteine 259. Aspartate 200 serves as a coordination point for substrate. Aspartate 201 is a Mn(2+) binding site. The active site involves aspartate 289. Mn(2+) is bound at residue histidine 313. Cysteine 363 and cysteine 372 are joined by a disulfide.

The protein belongs to the glycosyltransferase 31 family. Mn(2+) serves as cofactor. It depends on Co(2+) as a cofactor. A soluble form may be derived from the membrane form by proteolytic processing. Detected at 12.5 dpc in all tissues examined with the highest level observed in adult brain and spleen. Detected in the dental epithelium.

Its subcellular location is the golgi apparatus. The protein localises to the golgi apparatus membrane. The catalysed reaction is 3-O-(alpha-L-fucosyl)-L-threonyl-[EGF-like domain protein] + UDP-N-acetyl-alpha-D-glucosamine = 3-O-(N-acetyl-beta-D-glucosaminyl-(1-&gt;3)-alpha-L-fucosyl)-L-threonyl-[EGF-like domain protein] + UDP + H(+). The enzyme catalyses 3-O-(alpha-L-fucosyl)-L-seryl-[EGF-like domain protein] + UDP-N-acetyl-alpha-D-glucosamine = 3-O-(N-acetyl-beta-D-glucosaminyl-(1-&gt;3)-alpha-L-fucosyl)-L-seryl-[EGF-like domain protein] + UDP + H(+). Glycosyltransferase that initiates the elongation of O-linked fucose residues attached to EGF-like repeats in the extracellular domain of Notch molecules. Modulates NOTCH1 activity by modifying O-fucose residues at specific EGF-like domains resulting in inhibition of NOTCH1 activation by JAG1 and enhancement of NOTCH1 activation by DLL1 via an increase in its binding to DLL1. Decreases the binding of JAG1 to NOTCH2 but not that of DLL1. Essential mediator of somite segmentation and patterning. During somite boundary formation, it restricts Notch activity in the presomitic mesoderm to a boundary-forming territory in the posterior half of the prospective somite. In this region, Notch function activates a set of genes that are involved in boundary formation and in anterior-posterior somite identity. Ectopically expressed in the thymus, Lfgn inhibits Notch signaling which results in inhibition of T-cell commitment and promotes B-cell development in lymphoid progenitors. May play a role in boundary formation of the enamel knot. The chain is Beta-1,3-N-acetylglucosaminyltransferase lunatic fringe from Mus musculus (Mouse).